The chain runs to 1071 residues: Carbamoyl phosphate synthase pyrimidine-specific large chain (1071 aa).

A carboxyphosphate synthetic domain region spans residues 1 to 401 (MPKRVDINKI…SLLKAVRSLE (401 aa)). ATP is bound by residues Arg129, Arg169, Gly175, Gly176, Lys208, Ile210, Glu215, Gly241, Ile242, His243, Gln284, and Glu298. In terms of domain architecture, ATP-grasp 1 spans 133 to 327 (RTLMNELNEP…IAKLAAKIAV (195 aa)). Gln284, Glu298, and Asn300 together coordinate Mg(2+). 3 residues coordinate Mn(2+): Gln284, Glu298, and Asn300. The interval 402 to 546 (ADVYHLELKD…YSTYEEENES (145 aa)) is oligomerization domain. Residues 547 to 929 (VVTDKKSVMV…ALYKALIASG (383 aa)) are carbamoyl phosphate synthetic domain. The region spanning 671–861 (EQALGELGVP…MANLATKIIL (191 aa)) is the ATP-grasp 2 domain. Arg707, Arg746, Leu748, Glu752, Gly777, Val778, His779, Ser780, Gln820, and Glu832 together coordinate ATP. Gln820, Glu832, and Asn834 together coordinate Mg(2+). 3 residues coordinate Mn(2+): Gln820, Glu832, and Asn834. In terms of domain architecture, MGS-like spans 930-1071 (IQIPNYGSVL…NTNQEAAVTI (142 aa)). An allosteric domain region spans residues 930 to 1071 (IQIPNYGSVL…NTNQEAAVTI (142 aa)).

The protein belongs to the CarB family. As to quaternary structure, composed of two chains; the small (or glutamine) chain promotes the hydrolysis of glutamine to ammonia, which is used by the large (or ammonia) chain to synthesize carbamoyl phosphate. Tetramer of heterodimers (alpha,beta)4. Interacts with BrxC. The cofactor is Mg(2+). It depends on Mn(2+) as a cofactor.

The catalysed reaction is hydrogencarbonate + L-glutamine + 2 ATP + H2O = carbamoyl phosphate + L-glutamate + 2 ADP + phosphate + 2 H(+). It carries out the reaction hydrogencarbonate + NH4(+) + 2 ATP = carbamoyl phosphate + 2 ADP + phosphate + 2 H(+). The protein operates within amino-acid biosynthesis; L-arginine biosynthesis; carbamoyl phosphate from bicarbonate: step 1/1. It participates in pyrimidine metabolism; UMP biosynthesis via de novo pathway; (S)-dihydroorotate from bicarbonate: step 1/3. Its function is as follows. Small subunit of the glutamine-dependent carbamoyl phosphate synthetase (CPSase). CPSase catalyzes the formation of carbamoyl phosphate from the ammonia moiety of glutamine, carbonate, and phosphate donated by ATP, constituting the first step of the biosynthetic pathway leading to pyrimidine nucleotides. The large subunit (synthetase) binds the substrates ammonia (free or transferred from glutamine from the small subunit), hydrogencarbonate and ATP and carries out an ATP-coupled ligase reaction, activating hydrogencarbonate by forming carboxy phosphate which reacts with ammonia to form carbamoyl phosphate. The sequence is that of Carbamoyl phosphate synthase pyrimidine-specific large chain (pyrAB) from Bacillus subtilis (strain 168).